The primary structure comprises 627 residues: Mitochondrial distribution and morphology protein 34 (627 aa).

The region spanning 1 to 195 (MAFNFNWSPL…LPAIIHRLSL (195 aa)) is the SMP-LTD domain. Disordered regions lie at residues 209–230 (SAQV…NPPQ), 332–470 (ASLA…RTSP), 486–557 (LQRQ…SRPS), and 586–627 (RIQD…AYRH). 2 stretches are compositionally biased toward low complexity: residues 215-225 (PSLDGPGLDPL) and 332-341 (ASLASSSHSR). Residues 360 to 372 (RHSKAHARKRKKR) are compositionally biased toward basic residues. Basic and acidic residues predominate over residues 373–384 (VVDLRRRPKSAD). Over residues 390 to 412 (SGESAYTETSTTTSAVSVFSGST) the composition is skewed to low complexity. The span at 436–451 (TLRDRIAARDDAERNS) shows a compositional bias: basic and acidic residues. Low complexity predominate over residues 528–557 (PNASNNYTSSSSPSARDPQQQQPQQLSRPS).

This sequence belongs to the MDM34 family. As to quaternary structure, component of the ER-mitochondria encounter structure (ERMES) or MDM complex, composed of MMM1, MDM10, MDM12 and MDM34.

The protein localises to the mitochondrion outer membrane. In terms of biological role, component of the ERMES/MDM complex, which serves as a molecular tether to connect the endoplasmic reticulum (ER) and mitochondria. Components of this complex are involved in the control of mitochondrial shape and protein biogenesis, and function in nonvesicular lipid trafficking between the ER and mitochondria. MDM34 is required for the interaction of the ER-resident membrane protein MMM1 and the outer mitochondrial membrane-resident beta-barrel protein MDM10. In Blastomyces gilchristii (strain SLH14081) (Blastomyces dermatitidis), this protein is Mitochondrial distribution and morphology protein 34.